A 478-amino-acid polypeptide reads, in one-letter code: MLO-like protein 13 (478 aa).

The Extracellular segment spans residues Met1 to Glu10. Residues Tyr11–Ala31 traverse the membrane as a helical segment. At Glu32–Glu60 the chain is on the cytoplasmic side. A helical transmembrane segment spans residues Leu61 to Ile81. Over Cys82–His145 the chain is Extracellular. The helical transmembrane segment at Ile146 to Gly166 threads the bilayer. Topologically, residues Gly167–Lys276 are cytoplasmic. 2 helical membrane-spanning segments follow: residues Val277–Gly297 and Gly298–Ala318. Over Lys319–Gln360 the chain is Cytoplasmic. The helical transmembrane segment at Leu361–Phe381 threads the bilayer. Residues Thr382–Leu400 lie on the Extracellular side of the membrane. A helical transmembrane segment spans residues Val401–Val421. The Cytoplasmic segment spans residues Thr422–Pro478. The interval Asn435 to Ser456 is calmodulin-binding. Over residues Arg449 to Glu462 the composition is skewed to basic and acidic residues. The interval Arg449–Pro478 is disordered. The segment covering Gln464–Pro478 has biased composition (polar residues).

It belongs to the MLO family.

It localises to the membrane. Functionally, may be involved in modulation of pathogen defense and leaf cell death. Activity seems to be regulated by Ca(2+)-dependent calmodulin binding and seems not to require heterotrimeric G proteins. The polypeptide is MLO-like protein 13 (MLO13) (Arabidopsis thaliana (Mouse-ear cress)).